A 662-amino-acid polypeptide reads, in one-letter code: Threonine--tRNA ligase (662 aa).

The 64-residue stretch at 1–64 folds into the TGS domain; sequence MSQSVSLTFP…ADGKIEIITR (64 aa). Residues 245–547 form a catalytic region; the sequence is DHRRLGREMD…LIENFAGHMP (303 aa). 3 residues coordinate Zn(2+): Cys341, His392, and His524.

The protein belongs to the class-II aminoacyl-tRNA synthetase family. In terms of assembly, homodimer. It depends on Zn(2+) as a cofactor.

Its subcellular location is the cytoplasm. It carries out the reaction tRNA(Thr) + L-threonine + ATP = L-threonyl-tRNA(Thr) + AMP + diphosphate + H(+). In terms of biological role, catalyzes the attachment of threonine to tRNA(Thr) in a two-step reaction: L-threonine is first activated by ATP to form Thr-AMP and then transferred to the acceptor end of tRNA(Thr). Also edits incorrectly charged L-seryl-tRNA(Thr). The sequence is that of Threonine--tRNA ligase from Rhizobium rhizogenes (strain K84 / ATCC BAA-868) (Agrobacterium radiobacter).